A 205-amino-acid chain; its full sequence is Molybdenum cofactor guanylyltransferase (205 aa).

Residues leucine 14–glycine 16, lysine 27, aspartate 77, and aspartate 107 contribute to the GTP site. Position 107 (aspartate 107) interacts with Mg(2+).

It belongs to the MobA family. As to quaternary structure, monomer. The cofactor is Mg(2+).

The protein resides in the cytoplasm. The catalysed reaction is Mo-molybdopterin + GTP + H(+) = Mo-molybdopterin guanine dinucleotide + diphosphate. Its function is as follows. Transfers a GMP moiety from GTP to Mo-molybdopterin (Mo-MPT) cofactor (Moco or molybdenum cofactor) to form Mo-molybdopterin guanine dinucleotide (Mo-MGD) cofactor. The protein is Molybdenum cofactor guanylyltransferase of Burkholderia cenocepacia (strain HI2424).